Reading from the N-terminus, the 62-residue chain is Large ribosomal subunit protein uL29 (62 aa).

Belongs to the universal ribosomal protein uL29 family.

This is Large ribosomal subunit protein uL29 from Syntrophotalea carbinolica (strain DSM 2380 / NBRC 103641 / GraBd1) (Pelobacter carbinolicus).